A 139-amino-acid polypeptide reads, in one-letter code: Putative pre-16S rRNA nuclease (139 aa).

The protein belongs to the YqgF nuclease family.

It is found in the cytoplasm. Functionally, could be a nuclease involved in processing of the 5'-end of pre-16S rRNA. The protein is Putative pre-16S rRNA nuclease of Streptococcus pyogenes serotype M2 (strain MGAS10270).